The sequence spans 659 residues: RNA polymerase II subunit A C-terminal domain phosphatase (659 aa).

The FCP1 homology domain maps to 139 to 303; that stretch reads ITNRKLVLLV…KNSKEQMPVQ (165 aa). The BRCT domain occupies 351-443; it reads ERHKVLDGCV…LKADENLFQL (93 aa). Residues 484–504 show a composition bias toward acidic residues; the sequence is ALSDDEDDGDNEDEDDDGNDV. Residues 484-640 form a disordered region; that stretch reads ALSDDEDDGD…PESDDDDEFE (157 aa). Residues 505–519 show a composition bias toward basic and acidic residues; it reads GEDKGDENLEEKQEK. The segment covering 529 to 538 has biased composition (polar residues); the sequence is QNGSVENQSG. Acidic residues-rich tracts occupy residues 560 to 576, 596 to 607, and 616 to 640; these read MEDEEEESDSDNEDDDT, ENEDDAVFDVDD, and IDEEEDDEDNEDEEVPESDDDDEFE.

Its subcellular location is the nucleus. It catalyses the reaction O-phospho-L-seryl-[protein] + H2O = L-seryl-[protein] + phosphate. The catalysed reaction is O-phospho-L-threonyl-[protein] + H2O = L-threonyl-[protein] + phosphate. Its function is as follows. During the late stages of oogenesis, dephosphorylates 'Ser-5' of the heptad repeats YSPTSPS in the C-terminal domain of the largest RNA polymerase II subunit ama-1. Similarly, dephosphorylates 'Ser-5' of ama-1 in early embryonic cells prior to the activation of the zygotic transcription program at the 4-cell embryonic stage. May dephosphorylate 'Ser-2' of the ama-1 heptad repeats YSPTSPS in embryonic somatic and germline cells. This is RNA polymerase II subunit A C-terminal domain phosphatase from Caenorhabditis elegans.